We begin with the raw amino-acid sequence, 299 residues long: 4-sulfomuconolactone hydrolase (299 aa).

This sequence belongs to the metallo-dependent hydrolases superfamily. Sulfomuconolactone hydrolase family. As to quaternary structure, monomer. Zn(2+) is required as a cofactor.

It catalyses the reaction 4-sulfomuconolactone + H2O = maleylacetate + sulfite + 2 H(+). Functionally, involved in the degradation of 4-sulfocatechol which is a central intermediate in the degradation of substituted sulfonated benzenes. Catalyzes the hydrolytical desulfonation of 4-sulfomuconolactone to yield maleylacetate. The polypeptide is 4-sulfomuconolactone hydrolase (Rhizobium radiobacter (Agrobacterium tumefaciens)).